The sequence spans 410 residues: Proteasomal ubiquitin receptor ADRM1 (410 aa).

Positions 17 to 130 constitute a Pru domain; the sequence is SSSKYLVEFR…RKVNEYLNNP (114 aa). At serine 18 the chain carries Phosphoserine. Low complexity predominate over residues 191–257; that stretch reads GSGGPATSSS…PAAQTPSLPA (67 aa). Disordered regions lie at residues 191 to 264 and 381 to 410; these read GSGG…SSTQ and FAKA…MSLD. The 115-residue stretch at 281-395 folds into the DEUBAD domain; the sequence is PAMPTEGSGV…EGSDSKTDDG (115 aa). A compositionally biased stretch (basic and acidic residues) spans 381–401; it reads FAKAMEGSDSKTDDGDSKDKK.

It belongs to the ADRM1 family. In terms of assembly, component of the 19S proteasome regulatory particle complex. The 26S proteasome consists of a 20S core particle (CP) and two 19S regulatory subunits (RP).

It is found in the cytoplasm. The protein localises to the nucleus. Component of the 26S proteasome, a multiprotein complex involved in the ATP-dependent degradation of ubiquitinated proteins. This complex plays a key role in the maintenance of protein homeostasis by removing misfolded or damaged proteins, which could impair cellular functions, and by removing proteins whose functions are no longer required. Therefore, the proteasome participates in numerous cellular processes, including cell cycle progression, apoptosis, or DNA damage repair. Within the complex, functions as a proteasomal ubiquitin receptor. This Danio rerio (Zebrafish) protein is Proteasomal ubiquitin receptor ADRM1 (adrm1b).